Here is a 303-residue protein sequence, read N- to C-terminus: Probable cell division protein WhiA (303 aa).

A DNA-binding region (H-T-H motif) is located at residues 272-303 (SLQQIADSLDFAITKSGVNHRLRKINKLAEDL).

The protein belongs to the WhiA family.

Functionally, involved in cell division and chromosome segregation. The polypeptide is Probable cell division protein WhiA (Streptococcus equi subsp. zooepidemicus (strain MGCS10565)).